Reading from the N-terminus, the 231-residue chain is Adenosine 5'-phosphosulfate reductase (231 aa).

Positions 118, 119, 201, and 204 each coordinate [4Fe-4S] cluster. C227 functions as the Nucleophile; cysteine thiosulfonate intermediate in the catalytic mechanism.

This sequence belongs to the PAPS reductase family. CysH subfamily. It depends on [4Fe-4S] cluster as a cofactor.

Its subcellular location is the cytoplasm. It carries out the reaction [thioredoxin]-disulfide + sulfite + AMP + 2 H(+) = adenosine 5'-phosphosulfate + [thioredoxin]-dithiol. It participates in sulfur metabolism; hydrogen sulfide biosynthesis; sulfite from sulfate. Catalyzes the formation of sulfite from adenosine 5'-phosphosulfate (APS) using thioredoxin as an electron donor. This Halalkalibacterium halodurans (strain ATCC BAA-125 / DSM 18197 / FERM 7344 / JCM 9153 / C-125) (Bacillus halodurans) protein is Adenosine 5'-phosphosulfate reductase.